We begin with the raw amino-acid sequence, 379 residues long: uncharacterized protein (379 aa).

This is an uncharacterized protein from Shouchella clausii (Alkalihalobacillus clausii).